Consider the following 215-residue polypeptide: Oligoribonuclease (215 aa).

The 166-residue stretch at 5–170 folds into the Exonuclease domain; the sequence is LVWIDCEMTG…ADIHESIREL (166 aa). Residue Tyr-127 is part of the active site. The interval 196–215 is disordered; sequence LGPPGKDAADTDSAAGHTTG.

The protein belongs to the oligoribonuclease family.

The protein localises to the cytoplasm. 3'-to-5' exoribonuclease specific for small oligoribonucleotides. The chain is Oligoribonuclease from Mycobacterium sp. (strain JLS).